Here is a 432-residue protein sequence, read N- to C-terminus: Adenylosuccinate synthetase (432 aa).

Residues 12–18 (GDEGKGK) and 40–42 (GHT) contribute to the GTP site. Asp13 acts as the Proton acceptor in catalysis. Residues Asp13 and Gly40 each contribute to the Mg(2+) site. IMP-binding positions include 13 to 16 (DEGK), 38 to 41 (NAGH), Thr130, Arg144, Gln225, Thr240, and Arg304. The active-site Proton donor is His41. 300–306 (ATTGRPR) provides a ligand contact to substrate. GTP-binding positions include Arg306, 332–334 (KLD), and 414–416 (SVG).

This sequence belongs to the adenylosuccinate synthetase family. As to quaternary structure, homodimer. Mg(2+) is required as a cofactor.

Its subcellular location is the cytoplasm. The catalysed reaction is IMP + L-aspartate + GTP = N(6)-(1,2-dicarboxyethyl)-AMP + GDP + phosphate + 2 H(+). It participates in purine metabolism; AMP biosynthesis via de novo pathway; AMP from IMP: step 1/2. In terms of biological role, plays an important role in the de novo pathway of purine nucleotide biosynthesis. Catalyzes the first committed step in the biosynthesis of AMP from IMP. The polypeptide is Adenylosuccinate synthetase (Anaeromyxobacter sp. (strain K)).